The following is a 287-amino-acid chain: S-methyl-5'-thioadenosine phosphorylase (287 aa).

Residues Thr13 and 55 to 56 (RH) contribute to the phosphate site. Residue Met186 participates in substrate binding. A phosphate-binding site is contributed by Thr187. Residue 210–212 (DYD) participates in substrate binding.

The protein belongs to the PNP/MTAP phosphorylase family. MTAP subfamily. In terms of assembly, homohexamer. Dimer of a homotrimer.

It carries out the reaction S-methyl-5'-thioadenosine + phosphate = 5-(methylsulfanyl)-alpha-D-ribose 1-phosphate + adenine. The protein operates within amino-acid biosynthesis; L-methionine biosynthesis via salvage pathway; S-methyl-5-thio-alpha-D-ribose 1-phosphate from S-methyl-5'-thioadenosine (phosphorylase route): step 1/1. In terms of biological role, catalyzes the reversible phosphorylation of S-methyl-5'-thioadenosine (MTA) to adenine and 5-methylthioribose-1-phosphate. Involved in the breakdown of MTA, a major by-product of polyamine biosynthesis. Responsible for the first step in the methionine salvage pathway after MTA has been generated from S-adenosylmethionine. Has broad substrate specificity with 6-aminopurine nucleosides as preferred substrates. The protein is S-methyl-5'-thioadenosine phosphorylase of Leptospira interrogans serogroup Icterohaemorrhagiae serovar Lai (strain 56601).